A 654-amino-acid polypeptide reads, in one-letter code: Mitochondrial-processing peptidase subunit alpha-1 (654 aa).

Positions 73-94 (SSSSYKGNNNNNNKLSYTTSSN) are disordered. A coiled-coil region spans residues 381 to 446 (HKNHLKSQLQ…EQLELQQVKE (66 aa)).

Belongs to the peptidase M16 family. Heterodimer of alpha and beta subunits, forming the mitochondrial processing protease (MPP) in which subunit alpha is involved in substrate recognition and binding and subunit beta is the catalytic subunit.

It is found in the mitochondrion matrix. In terms of biological role, substrate recognition and binding subunit of the essential mitochondrial processing protease (MPP), which cleaves the mitochondrial sequence off newly imported precursors proteins. This is Mitochondrial-processing peptidase subunit alpha-1 (mppA1) from Dictyostelium discoideum (Social amoeba).